Here is a 63-residue protein sequence, read N- to C-terminus: Transmembrane protein ZNF593OS (63 aa).

Residues 30-50 traverse the membrane as a helical segment; that stretch reads LAGVVATVLAVLGLGGSCYAV.

The protein resides in the membrane. This is Transmembrane protein ZNF593OS from Homo sapiens (Human).